The following is a 110-amino-acid chain: UPF0122 protein GK1195 (110 aa).

This sequence belongs to the UPF0122 family.

In terms of biological role, might take part in the signal recognition particle (SRP) pathway. This is inferred from the conservation of its genetic proximity to ftsY/ffh. May be a regulatory protein. The chain is UPF0122 protein GK1195 from Geobacillus kaustophilus (strain HTA426).